Reading from the N-terminus, the 251-residue chain is Triosephosphate isomerase (251 aa).

Substrate is bound at residue 10–12 (NWK). His-99 serves as the catalytic Electrophile. Catalysis depends on Glu-167, which acts as the Proton acceptor. Residues Gly-173, Ser-211, and 232–233 (GG) each bind substrate.

The protein belongs to the triosephosphate isomerase family. As to quaternary structure, homodimer.

The protein resides in the cytoplasm. It carries out the reaction D-glyceraldehyde 3-phosphate = dihydroxyacetone phosphate. Its pathway is carbohydrate biosynthesis; gluconeogenesis. It functions in the pathway carbohydrate degradation; glycolysis; D-glyceraldehyde 3-phosphate from glycerone phosphate: step 1/1. Its function is as follows. Involved in the gluconeogenesis. Catalyzes stereospecifically the conversion of dihydroxyacetone phosphate (DHAP) to D-glyceraldehyde-3-phosphate (G3P). The sequence is that of Triosephosphate isomerase from Neisseria meningitidis serogroup A / serotype 4A (strain DSM 15465 / Z2491).